Reading from the N-terminus, the 505-residue chain is Putative heat shock protein HSP 90-beta 4 (505 aa).

ATP contacts are provided by N22, K83, and F109. The disordered stretch occupies residues 197–248 (EKEISDDEEEKGEKEEEDKDDKEKPKTEDVGSDEEDDTDKNNKKKTKKIKEK). The span at 200–216 (ISDDEEEKGEKEEEDKD) shows a compositional bias: acidic residues.

Belongs to the heat shock protein 90 family. As to quaternary structure, homodimer.

Its subcellular location is the cytoplasm. Its function is as follows. Putative molecular chaperone that may promote the maturation, structural maintenance and proper regulation of specific target proteins. In Homo sapiens (Human), this protein is Putative heat shock protein HSP 90-beta 4 (HSP90AB4P).